A 565-amino-acid polypeptide reads, in one-letter code: Urocanate hydratase (565 aa).

NAD(+)-binding positions include 61–62 (GG), Gln-139, 185–187 (GMG), Glu-205, Arg-210, 251–252 (NA), 272–276 (QTSAH), 282–283 (YL), and Tyr-331. Cys-419 is a catalytic residue. The tract at residues 453–472 (LDSGSVASPNRETESMRDGS) is disordered. Positions 463-472 (RETESMRDGS) are enriched in basic and acidic residues. Gly-501 contacts NAD(+).

The protein belongs to the urocanase family. NAD(+) serves as cofactor.

It is found in the cytoplasm. The catalysed reaction is 4-imidazolone-5-propanoate = trans-urocanate + H2O. The protein operates within amino-acid degradation; L-histidine degradation into L-glutamate; N-formimidoyl-L-glutamate from L-histidine: step 2/3. Functionally, catalyzes the conversion of urocanate to 4-imidazolone-5-propionate. The polypeptide is Urocanate hydratase (Pseudomonas savastanoi pv. phaseolicola (strain 1448A / Race 6) (Pseudomonas syringae pv. phaseolicola (strain 1448A / Race 6))).